A 621-amino-acid chain; its full sequence is UvrABC system protein C (621 aa).

Residues 11–90 (TTPGVYLYKD…IKKHRPRYNI (80 aa)) enclose the GIY-YIG domain. A UVR domain is found at 200 to 235 (KELVELLQKDMLYASEALEFEKAATLRDQIQAIKHT).

The protein belongs to the UvrC family. In terms of assembly, interacts with UvrB in an incision complex.

Its subcellular location is the cytoplasm. The UvrABC repair system catalyzes the recognition and processing of DNA lesions. UvrC both incises the 5' and 3' sides of the lesion. The N-terminal half is responsible for the 3' incision and the C-terminal half is responsible for the 5' incision. This chain is UvrABC system protein C, found in Lawsonia intracellularis (strain PHE/MN1-00).